A 473-amino-acid chain; its full sequence is Phosphatidylserine synthase 2 (473 aa).

The segment at 1–25 (MRRGERRVAGGSGSESPLLKGRRST) is disordered. The Cytoplasmic portion of the chain corresponds to 1–40 (MRRGERRVAGGSGSESPLLKGRRSTESEVYDDGTNTFFWR). Phosphoserine is present on residues Ser12, Ser14, and Ser16. Residues 41 to 61 (AHTLTVLFILTCALGYVTLLE) form a helical membrane-spanning segment. The Lumenal portion of the chain corresponds to 62–74 (ETPQDTAYNTKRG). Residues 75 to 95 (IVASILVFLCFGVTQAKDGPF) traverse the membrane as a helical segment. Over 96–104 (SRPHPAYWR) the chain is Cytoplasmic. A helical membrane pass occupies residues 105-125 (FWLCVSVVYELFLIFILFQTV). Over 126 to 291 (QDGRQFLKYV…EWKPASSLHR (166 aa)) the chain is Lumenal. Asn159 carries N-linked (GlcNAc...) asparagine glycosylation. The helical transmembrane segment at 292-312 (WLAVCGIILVFLLAELNTFYL) threads the bilayer. Lys313 is a topological domain (cytoplasmic). The helical transmembrane segment at 314–334 (FVLWMPPEHYLVLLRLVFFVN) threads the bilayer. At 335 to 354 (VGGVAMREIYDFMDELKPHR) the chain is on the lumenal side. Residues 355–375 (KLGQQAWLVAAITVTELLIVV) traverse the membrane as a helical segment. Residues 376–381 (KYDPHT) are Cytoplasmic-facing. The chain crosses the membrane as a helical span at residues 382–402 (LTLSLPFYISQCWTLGSILVL). Residues 403 to 473 (TWTVWRFFLR…TAEEGTSAAS (71 aa)) are Lumenal-facing. Residues 422–473 (RRQKQQSHQARAVNNRDGHPGPDDDLLGTGTAEEEGTTNDGVTAEEGTSAAS) are disordered.

This sequence belongs to the phosphatidyl serine synthase family. As to expression, highly expressed in testis. Detected at lower levels in kidney and heart.

The protein resides in the endoplasmic reticulum membrane. The protein localises to the membrane. The catalysed reaction is a 1,2-diacyl-sn-glycero-3-phosphoethanolamine + L-serine = a 1,2-diacyl-sn-glycero-3-phospho-L-serine + ethanolamine. It carries out the reaction 1-hexadecanoyl-2-(9Z-octadecenoyl)-sn-glycero-3-phosphoethanolamine + L-serine = 1-hexadecanoyl-2-(9Z-octadecenoyl)-sn-glycero-3-phospho-L-serine + ethanolamine. It catalyses the reaction 1-hexadecanoyl-2-(4Z,7Z,10Z,13Z,16Z,19Z-docosahexaenoyl)-sn-glycero-3-phosphoethanolamine + L-serine = 1-hexadecanoyl-2-(4Z,7Z,10Z,13Z,16Z,19Z-docosahexaenoyl)-sn-glycero-3-phosphoserine + ethanolamine. The enzyme catalyses 1-octadecanoyl-2-(5Z,8Z,11Z,14Z)-eicosatetraenoyl-sn-glycero-3-phosphoethanolamine + L-serine = 1-octadecanoyl-2-(5Z,8Z,11Z,14Z)-eicosatetraenoyl-sn-glycero-3-phosphoserine + ethanolamine. The catalysed reaction is 1-octadecanoyl-2-(4Z,7Z,10Z,13Z,16Z,19Z-docosahexaenoyl)-sn-glycero-3-phosphoethanolamine + L-serine = 1-octadecanoyl-2-(4Z,7Z,10Z,13Z,16Z,19Z-docosahexaenoyl)-sn-glycero-3-phosphoserine + ethanolamine. It carries out the reaction 1-(1Z-octadecenyl)-2-(4Z,7Z,10Z,13Z,16Z,19Z-docosahexaenoyl)-sn-glycero-3-phosphoethanolamine + L-serine = 1-(1Z-octadecenyl)-2-(4Z,7Z,10Z,13Z,16Z,19Z-docosahexaenoyl)-sn-glycero-3-phospho-L-serine + ethanolamine. It catalyses the reaction 1-octadecanoyl-2-(9Z-octadecenoyl)-sn-glycero-3-phosphoethanolamine + L-serine = 1-octadecanoyl-2-(9Z-octadecenoyl)-sn-glycero-3-phospho-L-serine + ethanolamine. The enzyme catalyses 1-(1Z-octadecenyl)-2-(9Z-octadecenoyl)-sn-glycero-3-phosphoethanolamine + L-serine = 1-(1Z-octadecenyl)-2-(9Z-octadecenoyl)-sn-glycero-3-phospho-L-serine + ethanolamine. The catalysed reaction is 1-(1Z-octadecenyl)-2-(5Z,8Z,11Z,14Z- eicosatetraenoyl)-sn-glycero-3-phosphoethanolamine + L-serine = 1-(1Z-octadecenyl)-2-(5Z,8Z,11Z,14Z-eicosatetraenoyl)-sn-glycero-3-phospho-L-serine + ethanolamine. The protein operates within phospholipid metabolism; phosphatidylserine biosynthesis. Its activity is regulated as follows. Almost complete inhibition by ethanolamine in both the mitochondria-associated membrane (MAM) and endoplasmic reticulum (ER) per se. Its function is as follows. Catalyzes a base-exchange reaction in which the polar head group of phosphatidylethanolamine (PE) or phosphatidylcholine (PC) is replaced by L-serine. Catalyzes the conversion of phosphatatidylethanolamine and does not act on phosphatidylcholine. Can utilize both phosphatidylethanolamine (PE) plasmalogen and diacyl PE as substrate and the latter is six times better utilized, indicating the importance of an ester linkage at the sn-1 position. Although it shows no sn-1 fatty acyl preference, exhibits significant preference towards docosahexaenoic acid (22:6n-3) compared with 18:1 or 20:4 at the sn-2 position. The protein is Phosphatidylserine synthase 2 (Ptdss2) of Mus musculus (Mouse).